The primary structure comprises 2169 residues: Protein sidekick-1 (2169 aa).

The first 50 residues, 1-50 (MVGRKVDREIIARRNSRRDGMMMKLNFCFFFCRRWWAFLLLQLHMLQALA), serve as a signal peptide directing secretion. Topologically, residues 51-1961 (QDDVAPYFKT…TEAPFYEEWW (1911 aa)) are extracellular. 5 consecutive Ig-like C2-type domains span residues 56-138 (PYFK…SEVQ), 143-229 (GNFM…SPLI), 245-333 (PIIV…AFIS), 338-428 (PYFT…LDVT), and 432-521 (PAFI…VMLT). A disulfide bridge links cysteine 78 with cysteine 121. 3 N-linked (GlcNAc...) asparagine glycosylation sites follow: asparagine 93, asparagine 223, and asparagine 253. Intrachain disulfides connect cysteine 267-cysteine 314, cysteine 360-cysteine 410, and cysteine 453-cysteine 505. Asparagine 502, asparagine 524, and asparagine 534 each carry an N-linked (GlcNAc...) asparagine glycan. Residues 525–615 (RTFIVHPPEN…GNDSRMARLE (91 aa)) enclose the Ig-like C2-type 6 domain. Cysteine 547 and cysteine 599 are joined by a disulfide. N-linked (GlcNAc...) asparagine glycans are attached at residues asparagine 607, asparagine 631, asparagine 734, asparagine 773, asparagine 834, asparagine 967, and asparagine 977. 13 Fibronectin type-III domains span residues 622–718 (SPQN…LPEE), 723–819 (PPKN…TLQG), 824–922 (PPQN…TLED), 926–1020 (AVGH…VPPE), 1024–1123 (APSN…TLQA), 1128–1226 (APGS…TRES), 1231–1328 (PPEN…TKDD), 1332–1426 (PPIR…TEKR), 1431–1528 (PPQQ…TLQD), 1533–1651 (PPSS…VGEA), 1656–1752 (APQN…THQA), 1756–1851 (APSF…AGPA), and 1854–1955 (SPGS…TEAP). N-linked (GlcNAc...) asparagine glycans are attached at residues asparagine 1234 and asparagine 1285. The disordered stretch occupies residues 1423–1443 (TEKRERPAPPQQLTTPQSDVS). The segment covering 1433-1443 (QQLTTPQSDVS) has biased composition (polar residues). 5 N-linked (GlcNAc...) asparagine glycosylation sites follow: asparagine 1606, asparagine 1700, asparagine 1719, asparagine 1771, and asparagine 1845. Residues 1962–1982 (FLLVMALSSLILILLVVFALV) traverse the membrane as a helical segment. Residues 1983–2169 (LHGQSKKYKN…TPVTGFSSFV (187 aa)) lie on the Cytoplasmic side of the membrane. Disordered stretches follow at residues 2028-2050 (TFSK…HYSD) and 2145-2169 (GGVY…SSFV). Residues 2160–2169 (TPVTGFSSFV) show a composition bias toward polar residues. The short motif at 2163 to 2169 (TGFSSFV) is the PDZ-binding element.

The protein belongs to the sidekick family. Homodimer; mediates homophilic interactions to promote cell adhesion. In terms of tissue distribution, expressed by non-overlapping subsets of retinal neurons. SDK1, SDK2, DSCAM and DSCAML1 are expressed in non-overlapping subsets of interneurons and retinal ganglion cells (RGCs) that form synapses in distinct inner plexiform layer (IPL) sublaminae.

It is found in the cell membrane. The protein resides in the synapse. Its function is as follows. Adhesion molecule that promotes lamina-specific synaptic connections in the retina. Expressed in specific subsets of interneurons and retinal ganglion cells (RGCs) and promotes synaptic connectivity via homophilic interactions. This Gallus gallus (Chicken) protein is Protein sidekick-1.